A 151-amino-acid chain; its full sequence is Probable ubiquitin-conjugating enzyme E2 W-B (151 aa).

Residues 3 to 151 (SMQKRLQKEL…TKWWYHDDTC (149 aa)) enclose the UBC core domain. The active-site Glycyl thioester intermediate is C91.

This sequence belongs to the ubiquitin-conjugating enzyme family.

It is found in the nucleus. The enzyme catalyses S-ubiquitinyl-[E1 ubiquitin-activating enzyme]-L-cysteine + [E2 ubiquitin-conjugating enzyme]-L-cysteine = [E1 ubiquitin-activating enzyme]-L-cysteine + S-ubiquitinyl-[E2 ubiquitin-conjugating enzyme]-L-cysteine.. It catalyses the reaction S-ubiquitinyl-[E1 ubiquitin-activating enzyme]-L-cysteine + [acceptor protein]-N-terminal-amino acid = [E1 ubiquitin-activating enzyme]-L-cysteine + N-terminal-ubiquitinyl-[acceptor protein].. It functions in the pathway protein modification; protein ubiquitination. In terms of biological role, accepts ubiquitin from the E1 complex and catalyzes its covalent attachment to other proteins. Catalyzes monoubiquitination. Involved in degradation of misfolded chaperone substrate and DNA repair. In Danio rerio (Zebrafish), this protein is Probable ubiquitin-conjugating enzyme E2 W-B (ube2wb).